The following is a 207-amino-acid chain: Claudin-11 (207 aa).

A topological domain (cytoplasmic) is located at residue methionine 1. Residues 2 to 22 form a helical membrane-spanning segment; the sequence is VATCLQVVGFVTSFVGWIGVI. The Extracellular portion of the chain corresponds to 23-82; sequence VTTSTNDWVVTCGYTIPTCRKLDELGSKGLWADCVMATGLYHCKPLVDILILPGYVQACR. A helical membrane pass occupies residues 83 to 103; it reads ALMIAASVLGLPAILLLLTVL. Residues 104–122 lie on the Cytoplasmic side of the membrane; that stretch reads PCIRMGQEPGVAKYRRAQL. Residues 123–143 traverse the membrane as a helical segment; it reads AGVLLILLALCALVATIWFPV. The Extracellular segment spans residues 144-157; that stretch reads CAHRETTIVSFGYS. The chain crosses the membrane as a helical span at residues 158-178; that stretch reads LYAGWIGAVLCLVGGCVILCC. At 179-207 the chain is on the cytoplasmic side; sequence AGDAQAFGENRFYYTAGSSSPTHAKSAHV. 2 positions are modified to phosphoserine: serine 197 and serine 198.

This sequence belongs to the claudin family. As to quaternary structure, interacts with tetraspanin-3/TSPAN3. Interacts with OCLN.

The protein localises to the cell junction. It is found in the tight junction. The protein resides in the cell membrane. In terms of biological role, plays a major role in tight junction-specific obliteration of the intercellular space, through calcium-independent cell-adhesion activity. This Homo sapiens (Human) protein is Claudin-11 (CLDN11).